The following is a 785-amino-acid chain: Endonuclease MutS2 (785 aa).

Residue 333–340 (GPNTGGKT) coordinates ATP. One can recognise a Smr domain in the interval 710-785 (LDLRGQRYDE…GNGATIVQLK (76 aa)).

The protein belongs to the DNA mismatch repair MutS family. MutS2 subfamily. Homodimer. Binds to stalled ribosomes, contacting rRNA.

In terms of biological role, endonuclease that is involved in the suppression of homologous recombination and thus may have a key role in the control of bacterial genetic diversity. Its function is as follows. Acts as a ribosome collision sensor, splitting the ribosome into its 2 subunits. Detects stalled/collided 70S ribosomes which it binds and splits by an ATP-hydrolysis driven conformational change. Acts upstream of the ribosome quality control system (RQC), a ribosome-associated complex that mediates the extraction of incompletely synthesized nascent chains from stalled ribosomes and their subsequent degradation. Probably generates substrates for RQC. The chain is Endonuclease MutS2 from Lactobacillus acidophilus (strain ATCC 700396 / NCK56 / N2 / NCFM).